A 410-amino-acid polypeptide reads, in one-letter code: Trans-splicing factor Raa2, chloroplastic (410 aa).

2 disordered regions span residues 1 to 40 (MRTR…QRPA) and 56 to 106 (AADH…QQQV). The transit peptide at 1–46 (MRTRAGAFFGKQRSTSPSGSSTSASRQWLRSSPGRTQRPAAHRVLA) directs the protein to the chloroplast. A compositionally biased stretch (low complexity) spans 14 to 25 (STSPSGSSTSAS). The segment covering 26 to 35 (RQWLRSSPGR) has biased composition (polar residues). Residues 96 to 106 (RQAQRRQQQQV) show a composition bias toward low complexity.

It belongs to the pseudouridine synthase TruB family. Possibly associated with other factors required for trans-splicing.

The protein localises to the plastid. Its subcellular location is the chloroplast. Its function is as follows. Required for trans-splicing of exons 2 and 3 of the chloroplast encoded psaA mRNA (a group II intron). It is not known if this protein has pseudouridine activity; mutation of the potential active site residue does not cause loss of trans-splicing. The protein is Trans-splicing factor Raa2, chloroplastic (RAA2) of Chlamydomonas reinhardtii (Chlamydomonas smithii).